We begin with the raw amino-acid sequence, 543 residues long: MFCYQCEQTAKGEGCTISGVCGKKPETAALQDLLVYSLIGLSEVAVEARLYGVVGHEYDEFTVKALFTTLTNVNFDDASLAEYINRAVVLREQLKYRLKAAGGRAEFTDAPATFKPAADLNGMIEQGRNVGLKSDVFAADENIRSLQHITLFGIKGVAAYADHAMILGQEDKKVFEFIYDGLAAMRNSKLGLNDWVGLALKCGEINIRAMELLDAGNTGTYGHPTITRVPLGAKKGKAILISGHDLKDLEMLLKQTEGKGINIYTHGEMLPAHAYPELKKYPHFYGHYGTAWQNQINEFAAFPGPIVMTTNCIQKPRDSYLGSIYTMGSVSWPGAVHIKNDNYDQVIKKALEMPGFTEDKPGKEILVGFGRNTVLSVAPAVIDAVKNKQLRHFFLVAGCDGAKPGRSYYTEFVEKVPQDCVVLTLACGKFRFFDKDMGAIGGIPRLLDVGQCNDAYSAVKIAMALADAFKVGVNDLPLSMILSWYEQKAAAILLSLLYLGIKDIRLGPSLPAFITPAVLDVLVKNFNIMPITTPEQDLKAILG.

[4Fe-4S] cluster contacts are provided by cysteine 3, cysteine 6, cysteine 15, and cysteine 21. Positions 244, 268, 312, 399, 427, 452, 486, and 488 each coordinate hybrid [4Fe-2O-2S] cluster. Cysteine 399 bears the Cysteine persulfide mark.

It belongs to the HCP family. [4Fe-4S] cluster serves as cofactor. The cofactor is hybrid [4Fe-2O-2S] cluster.

The protein resides in the cytoplasm. The enzyme catalyses A + NH4(+) + H2O = hydroxylamine + AH2 + H(+). In terms of biological role, catalyzes the reduction of hydroxylamine to form NH(3) and H(2)O. The sequence is that of Hydroxylamine reductase from Methanocella arvoryzae (strain DSM 22066 / NBRC 105507 / MRE50).